We begin with the raw amino-acid sequence, 433 residues long: Enolase (433 aa).

Glutamine 167 serves as a coordination point for (2R)-2-phosphoglycerate. Glutamate 209 serves as the catalytic Proton donor. Mg(2+)-binding residues include aspartate 246, glutamate 291, and aspartate 318. Residues lysine 343, arginine 372, serine 373, and lysine 394 each coordinate (2R)-2-phosphoglycerate. Lysine 343 (proton acceptor) is an active-site residue.

Belongs to the enolase family. As to quaternary structure, component of the RNA degradosome, a multiprotein complex involved in RNA processing and mRNA degradation. Requires Mg(2+) as cofactor.

The protein localises to the cytoplasm. It is found in the secreted. It localises to the cell surface. It catalyses the reaction (2R)-2-phosphoglycerate = phosphoenolpyruvate + H2O. It participates in carbohydrate degradation; glycolysis; pyruvate from D-glyceraldehyde 3-phosphate: step 4/5. In terms of biological role, catalyzes the reversible conversion of 2-phosphoglycerate (2-PG) into phosphoenolpyruvate (PEP). It is essential for the degradation of carbohydrates via glycolysis. The polypeptide is Enolase (Shewanella piezotolerans (strain WP3 / JCM 13877)).